The sequence spans 102 residues: Small ribosomal subunit protein uS10 (102 aa).

The protein belongs to the universal ribosomal protein uS10 family. As to quaternary structure, part of the 30S ribosomal subunit.

Functionally, involved in the binding of tRNA to the ribosomes. In Caldanaerobacter subterraneus subsp. tengcongensis (strain DSM 15242 / JCM 11007 / NBRC 100824 / MB4) (Thermoanaerobacter tengcongensis), this protein is Small ribosomal subunit protein uS10.